The following is a 771-amino-acid chain: DnaJ homolog subfamily C member 16 (771 aa).

The first 25 residues, 1–25 (MELKRLSISWQFLIVLVLILQSLSA), serve as a signal peptide directing secretion. Residues 26-532 (LDFDPYRVLG…ESLLHSNWRE (507 aa)) lie on the Cytoplasmic side of the membrane. The J domain maps to 29 to 93 (DPYRVLGVSR…EKRTNYDHYG (65 aa)). Positions 116-244 (FYFDESFFHF…LRQFVESLLP (129 aa)) constitute a Thioredoxin domain. A helical; Anchor for type IV membrane protein transmembrane segment spans residues 533–553 (MMPLLSLIFSALFILFGTVIV). The Extracellular portion of the chain corresponds to 554 to 771 (QAFSDSNEER…FYIPSWPELD (218 aa)). The disordered stretch occupies residues 559–590 (SNEERESHPPDKEEVPEKAGKTEPSFTKESSS). Residues 560-579 (NEERESHPPDKEEVPEKAGK) show a composition bias toward basic and acidic residues. A glycan (N-linked (GlcNAc...) asparagine) is linked at N628.

Its subcellular location is the endoplasmic reticulum membrane. Functionally, plays an important role in regulating the size of autophagosomes during the formation process. The sequence is that of DnaJ homolog subfamily C member 16 (Dnajc16) from Rattus norvegicus (Rat).